Consider the following 276-residue polypeptide: RNA-binding protein pno-1 (276 aa).

Disordered stretches follow at residues 1 to 30 (MATSSSAFDDEFPMEEGMPELLDDEDVPST) and 62 to 101 (DVVMEDISQPDDSTTDSPDADAEQKPTKRSKGSKGESRVV). Positions 8–27 (FDDEFPMEEGMPELLDDEDV) are enriched in acidic residues. Residues 197–249 (GDHVSRAIGRIAGKDGRTKLVIENTTKTRIVVANTKIHILGAYQNLKLARNAV) form the KH domain.

It belongs to the PNO1 family. In terms of assembly, part of the small subunit (SSU) processome, composed of more than 70 proteins and the RNA chaperone small nucleolar RNA (snoRNA) U3.

It is found in the nucleus. It localises to the nucleolus. Part of the small subunit (SSU) processome, first precursor of the small eukaryotic ribosomal subunit. During the assembly of the SSU processome in the nucleolus, many ribosome biogenesis factors, an RNA chaperone and ribosomal proteins associate with the nascent pre-rRNA and work in concert to generate RNA folding, modifications, rearrangements and cleavage as well as targeted degradation of pre-ribosomal RNA by the RNA exosome. Positively regulates dimethylation of two adjacent adenosines in the loop of a conserved hairpin near the 3'-end of 18S rRNA. The sequence is that of RNA-binding protein pno-1 from Caenorhabditis briggsae.